A 1169-amino-acid polypeptide reads, in one-letter code: Protein MBD-R2 (1169 aa).

The THAP-type zinc finger occupies 5–59 (CCVANCPSTSRLLEHNGVTYHSFPLDPIIRAIWIKNSRISLERQITKSVLVCSRH). Disordered regions lie at residues 99 to 122 (RALQ…STND), 140 to 211 (SAER…KYSN), and 347 to 394 (AEEG…CAPQ). The span at 107-122 (EGTTETPGNAQSSTND) shows a compositional bias: polar residues. Residues 140 to 160 (SAERKATEEGKTGKAADDVKN) show a composition bias toward basic and acidic residues. Positions 190 to 202 (PAPGSASSSNSPL) are enriched in low complexity. Positions 353 to 363 (KSPTPVGTPVS) are enriched in polar residues. The region spanning 445-514 (KPTVIVQDWR…DVYDFSIHRR (70 aa)) is the MBD domain. A disordered region spans residues 527-565 (GYNPQPPPKPRPMDVSMNSTLDQSITSQHSLPSTPMPVK). Residues 542–559 (SMNSTLDQSITSQHSLPS) show a composition bias toward polar residues. Residues 640 to 665 (YVCPREDCAKTYRKEDFLLIHIRHYH) form a C2H2-type zinc finger. Residues 714 to 890 (QDLQQSRSFK…INAALAPPPA (177 aa)) form a disordered region. A compositionally biased stretch (low complexity) spans 726–742 (SVSATATSSTPSDITPT). Residues 774 to 784 (PTQSFNPSLSR) are compositionally biased toward polar residues. Over residues 798-810 (SGSRKSNRQRSQR) the composition is skewed to basic residues. Composition is skewed to polar residues over residues 853-862 (AATTPISSID) and 869-881 (SVST…QTDI).

As to quaternary structure, component of the non-specific lethal (NLS) histone acetyltransferase complex at least composed of mof, nls1, dgt1/NSL2, Rcd1/NSL3, Rcd5/MCRS2, MBD-R2 and wds.

It localises to the nucleus. Its subcellular location is the chromosome. Its function is as follows. Component of the non-specific lethal (NLS) complex, a multiprotein complex that promotes expression of housekeeping genes on X chromosome and autosomes. The chain is Protein MBD-R2 from Drosophila melanogaster (Fruit fly).